The primary structure comprises 266 residues: NADP-dependent mannitol dehydrogenase (266 aa).

The NADP(+) site is built by Thr31, Ile33, Asn107, and Arg140. Ser159 functions as the Proton donor in the catalytic mechanism. Positions 174, 178, 206, and 208 each coordinate NADP(+). Residue Tyr174 is the Proton acceptor of the active site. Residue Lys178 is the Lowers pKa of active site Tyr of the active site.

The protein belongs to the short-chain dehydrogenases/reductases (SDR) family. In terms of assembly, homotetramer.

The protein resides in the vacuole. The enzyme catalyses D-mannitol + NADP(+) = D-fructose + NADPH + H(+). This is NADP-dependent mannitol dehydrogenase from Alternaria alternata (Alternaria rot fungus).